Here is a 242-residue protein sequence, read N- to C-terminus: MKGLRLGVNIDHVATLRNARGVRYPDPVAAAAIAEQAGADGITIHLREDRRHITDRDVAMLKQTLNVPMNLEMAVTEEMLDIAIKTQPTYSCLVPEKRQELTTEGGLNVAGQLETITDATRRLSDAGIQVSLFIDADHEQIDAAKKAGAPIVELHTGQYAEAETEEQRTVELARLMEASEYAHSIGLQVNVGHGLHYHNTLEVAEIPQVCELNIGHSIIARAVLVGLDQAVRDMRNILDKAR.

Residue Asn9 coordinates 3-amino-2-oxopropyl phosphate. A 1-deoxy-D-xylulose 5-phosphate-binding site is contributed by 11–12; it reads DH. Residue Arg20 coordinates 3-amino-2-oxopropyl phosphate. The active-site Proton acceptor is the His45. Arg47 and His52 together coordinate 1-deoxy-D-xylulose 5-phosphate. Glu72 acts as the Proton acceptor in catalysis. Position 102 (Thr102) interacts with 1-deoxy-D-xylulose 5-phosphate. The Proton donor role is filled by His193. Residues Gly194 and 215–216 each bind 3-amino-2-oxopropyl phosphate; that span reads GH.

Belongs to the PNP synthase family. Homooctamer; tetramer of dimers.

It is found in the cytoplasm. It carries out the reaction 3-amino-2-oxopropyl phosphate + 1-deoxy-D-xylulose 5-phosphate = pyridoxine 5'-phosphate + phosphate + 2 H2O + H(+). It participates in cofactor biosynthesis; pyridoxine 5'-phosphate biosynthesis; pyridoxine 5'-phosphate from D-erythrose 4-phosphate: step 5/5. Its function is as follows. Catalyzes the complicated ring closure reaction between the two acyclic compounds 1-deoxy-D-xylulose-5-phosphate (DXP) and 3-amino-2-oxopropyl phosphate (1-amino-acetone-3-phosphate or AAP) to form pyridoxine 5'-phosphate (PNP) and inorganic phosphate. The protein is Pyridoxine 5'-phosphate synthase of Idiomarina loihiensis (strain ATCC BAA-735 / DSM 15497 / L2-TR).